A 197-amino-acid polypeptide reads, in one-letter code: Nucleoside triphosphate pyrophosphatase (197 aa).

Catalysis depends on D72, which acts as the Proton acceptor.

It belongs to the Maf family. It depends on a divalent metal cation as a cofactor.

It is found in the cytoplasm. The enzyme catalyses a ribonucleoside 5'-triphosphate + H2O = a ribonucleoside 5'-phosphate + diphosphate + H(+). The catalysed reaction is a 2'-deoxyribonucleoside 5'-triphosphate + H2O = a 2'-deoxyribonucleoside 5'-phosphate + diphosphate + H(+). Nucleoside triphosphate pyrophosphatase. May have a dual role in cell division arrest and in preventing the incorporation of modified nucleotides into cellular nucleic acids. This Corynebacterium glutamicum (strain R) protein is Nucleoside triphosphate pyrophosphatase.